We begin with the raw amino-acid sequence, 87 residues long: Sec-independent protein translocase protein TatA (87 aa).

A helical membrane pass occupies residues 1-21 (MGSFSIWHWLIVLLIVVMVFG). Positions 40-87 (KDGMKDGSTPEGTPASTTAATPPAGQVTNQQAHAADPGTIDVEAKHKG) are disordered. Positions 46–64 (GSTPEGTPASTTAATPPAG) are enriched in low complexity.

This sequence belongs to the TatA/E family. In terms of assembly, the Tat system comprises two distinct complexes: a TatABC complex, containing multiple copies of TatA, TatB and TatC subunits, and a separate TatA complex, containing only TatA subunits. Substrates initially bind to the TatABC complex, which probably triggers association of the separate TatA complex to form the active translocon.

It is found in the cell inner membrane. Functionally, part of the twin-arginine translocation (Tat) system that transports large folded proteins containing a characteristic twin-arginine motif in their signal peptide across membranes. TatA could form the protein-conducting channel of the Tat system. The polypeptide is Sec-independent protein translocase protein TatA (Paracidovorax citrulli (strain AAC00-1) (Acidovorax citrulli)).